Consider the following 48-residue polypeptide: uncharacterized protein (48 aa).

The segment at 1-20 is disordered; it reads MLLKNWPSRRIQRDKSKRAG.

This is an uncharacterized protein from Bacillus subtilis (strain 168).